Here is a 358-residue protein sequence, read N- to C-terminus: Protein-arginine kinase (358 aa).

The Phosphagen kinase C-terminal domain maps to 24 to 255; the sequence is IVLSSRIRLA…KQLIRQERVA (232 aa). Residues 27–31, histidine 92, arginine 126, 177–181, and 208–213 each bind ATP; these read SSRIR, RASVM, and RGIYGE. Residues 338–343 carry the RDXXRA motif of the pArg binding pocket involved in allosteric regulation motif; the sequence is RDERRA.

Belongs to the ATP:guanido phosphotransferase family.

The enzyme catalyses L-arginyl-[protein] + ATP = N(omega)-phospho-L-arginyl-[protein] + ADP + H(+). Its activity is regulated as follows. Appears to be allosterically activated by the binding of pArg-containing polypeptides to the pArg-binding pocket localized in the C-terminal domain of McsB. In terms of biological role, catalyzes the specific phosphorylation of arginine residues in a large number of proteins. Is part of the bacterial stress response system. Protein arginine phosphorylation has a physiologically important role and is involved in the regulation of many critical cellular processes, such as protein homeostasis, motility, competence, and stringent and stress responses, by regulating gene expression and protein activity. This is Protein-arginine kinase from Shouchella clausii (strain KSM-K16) (Alkalihalobacillus clausii).